The primary structure comprises 472 residues: Sodium-coupled neutral amino acid transporter 5 (472 aa).

Met-1 is subject to N-acetylmethionine. The Cytoplasmic portion of the chain corresponds to 1–48 (MELQDPKMNGALPSDAVGYRQEREGFLPSRGPAPGSKPVQFMDFEGKT). The chain crosses the membrane as a helical span at residues 49-71 (SFGMSVFNLSNAIMGSGILGLAY). Over 72-87 (AMAHTGVIFFLALLLC) the chain is Extracellular. Residues 88–108 (IALLSSYSIHLLLTCAGIAGI) traverse the membrane as a helical segment. At 109 to 125 (RAYEQLGQRAFGPAGKV) the chain is on the cytoplasmic side. Residues 126–146 (VVATVICLHNVGAMSSYLFII) form a helical membrane-spanning segment. Residues 147 to 166 (KSELPLVIGTFLYMDPEGDW) lie on the Extracellular side of the membrane. The chain crosses the membrane as a helical span at residues 167–187 (FLKGNLLIIIVSVLIILPLAL). Topologically, residues 188 to 192 (MKHLG) are cytoplasmic. A helical membrane pass occupies residues 193–213 (YLGYTSGLSLTCMLFFLVSVI). Residues 214–257 (YKKFQLGCAIGHNETAMESEALVGLPSQGLNSSCEAQMFTVDSQ) are Extracellular-facing. Cys-221 and Cys-247 form a disulfide bridge. N-linked (GlcNAc...) asparagine glycosylation is present at Asn-226. A helical membrane pass occupies residues 258-278 (MSYTVPIMAFAFVCHPEVLPI). Residues 279-295 (YTELCRPSKRRMQAVAN) lie on the Cytoplasmic side of the membrane. Residues 296-316 (VSIGAMFCMYGLTATFGYLTF) traverse the membrane as a helical segment. Over 317–334 (YSSVKAEMLHMYSQKDPL) the chain is Extracellular. The chain crosses the membrane as a helical span at residues 335–355 (ILCVRLAVLLAVTLTVPVVLF). Topologically, residues 356–376 (PIRRALQQLLFPGKAFSWPRH) are cytoplasmic. A helical membrane pass occupies residues 377-397 (VAIALILLVLVNVLVICVPTI). The Extracellular portion of the chain corresponds to 398–399 (RD). Residues 400–420 (IFGVIGSTSAPSLIFILPSIF) form a helical membrane-spanning segment. The Cytoplasmic portion of the chain corresponds to 421–439 (YLRIVPSEVEPFLSWPKIQ). Residues 440-460 (ALCFGVLGVLFMAVSLGFMFA) traverse the membrane as a helical segment. At 461 to 472 (NWATGQSRMSGH) the chain is on the extracellular side.

Belongs to the amino acid/polyamine transporter 2 family. In terms of tissue distribution, predominantly expressed in stomach, brain, liver, lung and intestinal tract.

The protein localises to the cell membrane. The catalysed reaction is L-serine(out) + Na(+)(out) + H(+)(in) = L-serine(in) + Na(+)(in) + H(+)(out). The enzyme catalyses L-alanine(out) + Na(+)(out) + H(+)(in) = L-alanine(in) + Na(+)(in) + H(+)(out). It catalyses the reaction glycine(out) + Na(+)(out) + H(+)(in) = glycine(in) + Na(+)(in) + H(+)(out). It carries out the reaction L-glutamine(out) + Na(+)(out) + H(+)(in) = L-glutamine(in) + Na(+)(in) + H(+)(out). The catalysed reaction is L-asparagine(out) + Na(+)(out) + H(+)(in) = L-asparagine(in) + Na(+)(in) + H(+)(out). The enzyme catalyses L-histidine(out) + Na(+)(out) + H(+)(in) = L-histidine(in) + Na(+)(in) + H(+)(out). It catalyses the reaction L-cysteine(out) + Na(+)(out) + H(+)(in) = L-cysteine(in) + Na(+)(in) + H(+)(out). Not inhibited by lithium. Partial allosteric regulation on ions sodium binding. In terms of biological role, symporter that cotransports neutral amino acids and sodium ions, coupled to an H(+) antiporter activity. Releases L-glutamine and glycine from astroglial cells and may participate in the glutamate/GABA-L-glutamine cycle and the NMDA receptors activation. In addition, contributes significantly to L-glutamine uptake in retina, namely in ganglion and Mueller cells therefore, participates in the retinal glutamate-glutamine cycle. The transport activity is pH sensitive and Li(+) tolerant. Moreover functions in both direction and is associated with large uncoupled fluxes of protons. The transport is electroneutral coupled to the cotransport of 1 Na(+) and the antiport of 1 H(+). May have a particular importance for modulation of net hepatic glutamine flux. This is Sodium-coupled neutral amino acid transporter 5 (SLC38A5) from Homo sapiens (Human).